The chain runs to 512 residues: D-alanine--D-alanyl carrier protein ligase (512 aa).

152–153 is an ATP binding site; that stretch reads TS. A D-alanine-binding site is contributed by Asp199. ATP is bound at residue 294-299; the sequence is NAYGPT. Val303 provides a ligand contact to D-alanine. ATP-binding positions include Asp385, 397–400, and Lys499; that span reads YGGR. Lys499 serves as a coordination point for D-alanine.

It belongs to the ATP-dependent AMP-binding enzyme family. DltA subfamily.

The protein resides in the cytoplasm. It carries out the reaction holo-[D-alanyl-carrier protein] + D-alanine + ATP = D-alanyl-[D-alanyl-carrier protein] + AMP + diphosphate. Its pathway is cell wall biogenesis; lipoteichoic acid biosynthesis. Its function is as follows. Catalyzes the first step in the D-alanylation of lipoteichoic acid (LTA), the activation of D-alanine and its transfer onto the D-alanyl carrier protein (Dcp) DltC. In an ATP-dependent two-step reaction, forms a high energy D-alanyl-AMP intermediate, followed by transfer of the D-alanyl residue as a thiol ester to the phosphopantheinyl prosthetic group of the Dcp. D-alanylation of LTA plays an important role in modulating the properties of the cell wall in Gram-positive bacteria, influencing the net charge of the cell wall. The protein is D-alanine--D-alanyl carrier protein ligase of Streptococcus pyogenes serotype M1.